We begin with the raw amino-acid sequence, 348 residues long: NADH-ubiquinone oxidoreductase chain 2 (348 aa).

The next 9 membrane-spanning stretches (helical) occupy residues 3-23 (PYVLMILLSSLGLGTTLTFAS), 60-80 (FLTQATAAAMILFASTTNAWM), 96-116 (TMFMTALALKIGLAPMHFWMP), 149-169 (IDPLLLTLLGVTSTLVGGWGG), 178-197 (ILAYSSIAHMGWMIIVIQYA), 202-219 (LLALGTYIIMTSAAFLTL), 246-266 (LVLLSLGGLPPLTGFMPKWLI), 274-294 (DLPIIATTMALAALISLYFYL), and 326-346 (LALFTMATLGLLPMTPAILTL).

This sequence belongs to the complex I subunit 2 family.

The protein localises to the mitochondrion inner membrane. It catalyses the reaction a ubiquinone + NADH + 5 H(+)(in) = a ubiquinol + NAD(+) + 4 H(+)(out). Functionally, core subunit of the mitochondrial membrane respiratory chain NADH dehydrogenase (Complex I) that is believed to belong to the minimal assembly required for catalysis. Complex I functions in the transfer of electrons from NADH to the respiratory chain. The immediate electron acceptor for the enzyme is believed to be ubiquinone. This chain is NADH-ubiquinone oxidoreductase chain 2 (MT-ND2), found in Carassius auratus (Goldfish).